The sequence spans 466 residues: Soluble pyridine nucleotide transhydrogenase (466 aa).

E36–C45 contacts FAD.

The protein belongs to the class-I pyridine nucleotide-disulfide oxidoreductase family. It depends on FAD as a cofactor.

The protein resides in the cytoplasm. It catalyses the reaction NAD(+) + NADPH = NADH + NADP(+). In terms of biological role, conversion of NADPH, generated by peripheral catabolic pathways, to NADH, which can enter the respiratory chain for energy generation. This is Soluble pyridine nucleotide transhydrogenase from Escherichia coli O9:H4 (strain HS).